Here is a 408-residue protein sequence, read N- to C-terminus: Large ribosomal subunit protein uL4 (408 aa).

A disordered region spans residues 58-98 (PYAVSKKAGHQTSAESWGTGRAVSRIPRVPGGGTHRAGQGA).

This sequence belongs to the universal ribosomal protein uL4 family.

In Prunus armeniaca (Apricot), this protein is Large ribosomal subunit protein uL4 (RPL4).